The following is a 372-amino-acid chain: Lysophosphatidic acid receptor 5 (372 aa).

The Extracellular segment spans residues 1–26 (MLANSSSTNSSVLPCPDYRPTHRLHL). Asn4 and Asn9 each carry an N-linked (GlcNAc...) asparagine glycan. Residues 27-47 (VVYSLVLAAGLPLNALALWVF) traverse the membrane as a helical segment. Residues 48-55 (LRALRVHS) lie on the Cytoplasmic side of the membrane. The helical transmembrane segment at 56 to 76 (VVSVYMCNLAASDLLFTLSLP) threads the bilayer. The Extracellular segment spans residues 77–96 (VRLSYYALHHWPFPDLLCQT). Cysteines 94 and 175 form a disulfide. Residues 97–117 (TGAIFQMNMYGSCIFLMLINV) traverse the membrane as a helical segment. Topologically, residues 118-136 (DRYAAIVHPLRLRHLRRPR) are cytoplasmic. A helical membrane pass occupies residues 137–157 (VARLLCLGVWALILVFAVPAA). The Extracellular segment spans residues 158–187 (RVHRPSRCRYRDLEVRLCFESFSDELWKGR). The helical transmembrane segment at 188–208 (LLPLVLLAEALGFLLPLAAVV) threads the bilayer. At 209–239 (YSSGRVFWTLARPDATQSQRRRKTVRLLLAN) the chain is on the cytoplasmic side. The helical transmembrane segment at 240-260 (LVIFLLCFVPYNSTLAVYGLL) threads the bilayer. Residues 261-276 (RSKLVAASVPARDRVR) are Extracellular-facing. The chain crosses the membrane as a helical span at residues 277–297 (GVLMVMVLLAGANCVLDPLVY). The Cytoplasmic segment spans residues 298-372 (YFSAEGFRNT…FTQCPQDSAL (75 aa)). The tract at residues 312–372 (GTPHRARTSA…FTQCPQDSAL (61 aa)) is disordered. Polar residues-rich tracts occupy residues 332-341 (SERSAVTTDA) and 357-372 (SHSLSSFTQCPQDSAL).

The protein belongs to the G-protein coupled receptor 1 family. Not expressed in frontal cortex, basal forebrain, caudate putamen, thalamus, or hippocampus.

The protein resides in the cell membrane. In terms of biological role, receptor for lysophosphatidic acid (LPA), a mediator of diverse cellular activities. The polypeptide is Lysophosphatidic acid receptor 5 (LPAR5) (Homo sapiens (Human)).